A 560-amino-acid polypeptide reads, in one-letter code: MDFMKVFDQTVREIKREVNLKVLKVPEMEQKVLDATDNEPWGPHGTALAEIAQATKKFSECQMVMSVLWTRLSETGKDWRYVYKALAVIDYLISNGSERAVDEIIEHTYQISSLTSFEYVEPNGKDVGINVRKKAENIVALLNNKEKISEIRDKAVANRNKYVGLSSTGITYKSGSSASFGGSFQSGSSNFDSYKDRDSREDKNDYESFQKSRRGVKTEEQSYTSKKSFSRYGSTDHDNLSSGKKSPDSAKHRSYVSAAPSNNDDDFDDFDPRGTSSNKPSTGSANQVDLFGGDLIGDFLDSGPTETSSTNNNENFQEADLFADAAFVSASAQGAEFGSQTQKQVDLFSASEPSVTVSSAPPTVDLFASSESVVSPEAKISIPESMATPNIVDPFAAVPMDNFDGSDPFGAFTSHSASVSTGPQAPSVHGSATNTTSPLSFADSKPQHLQKKDPFQVKSGIWADSLSRGLIDLNITAPKKASLADVGVVGDLSNEDGNKASAASYYSGWSMGAGSGLGKTGLYSTQQQQQQQQQQQAPDISDDFFSSLSNQRYQSGGFKQ.

One can recognise an ENTH domain in the interval L20–R152. The disordered stretch occupies residues N190 to V288. Residues S193 to E220 are compositionally biased toward basic and acidic residues. Residues Q221 to G233 are compositionally biased toward polar residues. Basic and acidic residues predominate over residues S234–K251. Residues G274–Q287 show a composition bias toward polar residues. The Clathrin binding signature appears at I296–L300. An ALPHA-ADR binding motif is present at residues D320–F322. The segment covering S414–L439 has biased composition (polar residues). 2 disordered regions span residues S414–D453 and L517–Q560. Residues Q526–Q536 are compositionally biased toward low complexity. Residues F544–Q554 show a composition bias toward polar residues.

This sequence belongs to the epsin family. Interacts with clathrin, VTI11, GAMMA-ADR and VSR1. Binds to the deubiquitinating enzyme AMSH3. In terms of tissue distribution, mostly expressed in cotyledons and flowers, and, to a lower extent, in roots, leaves and siliques (at protein level).

The protein resides in the golgi apparatus. It localises to the prevacuolar compartment. It is found in the cytoplasm. Its subcellular location is the cytoplasmic vesicle. The protein localises to the clathrin-coated vesicle. The protein resides in the cytoskeleton. Its function is as follows. May have a role in transport via clathrin-coated vesicles from the trans-Golgi network to endosomes. Stimulates clathrin assembly. Does not seem to bind to phospholipids. Plays an important role in the vacuolar trafficking of soluble cargo proteins at the trans-Golgi network. This is Clathrin interactor EPSIN 1 (EPSIN1) from Arabidopsis thaliana (Mouse-ear cress).